We begin with the raw amino-acid sequence, 270 residues long: Endonuclease 4 (270 aa).

Zn(2+)-binding residues include His-69, His-108, Glu-139, Asp-169, His-172, His-204, Asp-217, His-219, and Glu-248.

It belongs to the AP endonuclease 2 family. Zn(2+) is required as a cofactor.

It catalyses the reaction Endonucleolytic cleavage to 5'-phosphooligonucleotide end-products.. Endonuclease IV plays a role in DNA repair. It cleaves phosphodiester bonds at apurinic or apyrimidinic (AP) sites, generating a 3'-hydroxyl group and a 5'-terminal sugar phosphate. In addition, possesses a 3'-5' exonuclease activity. In Thermus thermophilus (strain ATCC BAA-163 / DSM 7039 / HB27), this protein is Endonuclease 4.